We begin with the raw amino-acid sequence, 161 residues long: NADH-quinone oxidoreductase subunit C (161 aa).

It belongs to the complex I 30 kDa subunit family. As to quaternary structure, NDH-1 is composed of 14 different subunits. Subunits NuoB, C, D, E, F, and G constitute the peripheral sector of the complex.

The protein resides in the cell inner membrane. It carries out the reaction a quinone + NADH + 5 H(+)(in) = a quinol + NAD(+) + 4 H(+)(out). NDH-1 shuttles electrons from NADH, via FMN and iron-sulfur (Fe-S) centers, to quinones in the respiratory chain. The immediate electron acceptor for the enzyme in this species is believed to be ubiquinone. Couples the redox reaction to proton translocation (for every two electrons transferred, four hydrogen ions are translocated across the cytoplasmic membrane), and thus conserves the redox energy in a proton gradient. In Citrifermentans bemidjiense (strain ATCC BAA-1014 / DSM 16622 / JCM 12645 / Bem) (Geobacter bemidjiensis), this protein is NADH-quinone oxidoreductase subunit C.